Reading from the N-terminus, the 912-residue chain is Vomeronasal type-2 receptor 1 (912 aa).

The first 21 residues, 1 to 21 (MASRQISLALGFLAFLWAVLG), serve as a signal peptide directing secretion. At 22–623 (AQNKTEEVQC…LAYGEALGFT (602 aa)) the chain is on the extracellular side. Asn24, Asn38, Asn299, and Asn386 each carry an N-linked (GlcNAc...) asparagine glycan. The helical transmembrane segment at 624-644 (LVILSIFGALVVLAVTVVYVI) threads the bilayer. The Cytoplasmic portion of the chain corresponds to 645-657 (HRHTPLVKANDRE). A helical membrane pass occupies residues 658–678 (LSFLIQMSLVITVLSSLLFIG). Over 679 to 691 (KPCNWSCMARQIT) the chain is Extracellular. The chain crosses the membrane as a helical span at residues 692 to 712 (LALGFCLCLSSILGKTISLFF). Topologically, residues 713-732 (AYRISVSKTRLISMHPIFRK) are cytoplasmic. The chain crosses the membrane as a helical span at residues 733–753 (LIVLVCVVGEIGVCAAYLVLE). Residues 754–778 (PPRMFKNIEIQNVKIIFECNEGSVE) are Extracellular-facing. Residues 779 to 799 (FLCSIFGFDVLRALLCFLTTF) traverse the membrane as a helical segment. Over 800–812 (VARQLPDNYYEGK) the chain is Cytoplasmic. Residues 813 to 833 (CITFGMLVFFIVWISFVPAYL) traverse the membrane as a helical segment. Topologically, residues 834 to 840 (STKGKFK) are extracellular. A helical transmembrane segment spans residues 841-861 (VAVEIFAILASSYGLLGCLFL). Residues 862-912 (PKCFIILLRPKRNTDETVGGRVPTVDRSIQLTSASVSSELNSTTVSTVLDE) are Cytoplasmic-facing.

The protein belongs to the G-protein coupled receptor 3 family. Expressed at the sensory surface of the vomeronasal organ.

Its subcellular location is the cell membrane. Putative pheromone receptor. The polypeptide is Vomeronasal type-2 receptor 1 (Vmn2r1) (Mus musculus (Mouse)).